The following is a 130-amino-acid chain: Guanylate kinase (130 aa).

A Guanylate kinase-like domain is found at 1 to 130; that stretch reads KIFEDPTTSY…EKIQSRVNEA (130 aa).

The protein belongs to the guanylate kinase family.

Its subcellular location is the cytoplasm. The enzyme catalyses GMP + ATP = GDP + ADP. Its function is as follows. Essential for recycling GMP and indirectly, cGMP. The chain is Guanylate kinase (gmk) from Staphylococcus epidermidis.